The primary structure comprises 491 residues: Cobyric acid synthase (491 aa).

The region spanning 250 to 437 (RLRVVVPVLP…LHGIFDHPAA (188 aa)) is the GATase cobBQ-type domain. The active-site Nucleophile is the cysteine 331. Histidine 429 is an active-site residue.

It belongs to the CobB/CobQ family. CobQ subfamily.

It functions in the pathway cofactor biosynthesis; adenosylcobalamin biosynthesis. Catalyzes amidations at positions B, D, E, and G on adenosylcobyrinic A,C-diamide. NH(2) groups are provided by glutamine, and one molecule of ATP is hydrogenolyzed for each amidation. This is Cobyric acid synthase from Xanthomonas campestris pv. campestris (strain B100).